The sequence spans 130 residues: Translation initiation factor 5A (130 aa).

Lysine 36 bears the Hypusine mark.

Belongs to the eIF-5A family.

It localises to the cytoplasm. Its function is as follows. Functions by promoting the formation of the first peptide bond. The sequence is that of Translation initiation factor 5A (eif5a) from Methanothermobacter thermautotrophicus (strain ATCC 29096 / DSM 1053 / JCM 10044 / NBRC 100330 / Delta H) (Methanobacterium thermoautotrophicum).